Here is a 278-residue protein sequence, read N- to C-terminus: Cysteine-rich repeat secretory protein 18 (278 aa).

The signal sequence occupies residues 1-32; the sequence is MYSSSSVSKRFVLVPIVVVVTTQLLLVRNVSS. Gnk2-homologous domains are found at residues 39-147 and 160-267; these read YLHH…SLDT and PSAK…LYPF.

Belongs to the cysteine-rich repeat secretory protein family.

It is found in the secreted. The chain is Cysteine-rich repeat secretory protein 18 (CRRSP18) from Arabidopsis thaliana (Mouse-ear cress).